The following is a 391-amino-acid chain: Tryptophan synthase beta chain 2 (391 aa).

Lys-83 carries the post-translational modification N6-(pyridoxal phosphate)lysine.

This sequence belongs to the TrpB family. In terms of assembly, tetramer of two alpha and two beta chains. The cofactor is pyridoxal 5'-phosphate.

The enzyme catalyses (1S,2R)-1-C-(indol-3-yl)glycerol 3-phosphate + L-serine = D-glyceraldehyde 3-phosphate + L-tryptophan + H2O. Its pathway is amino-acid biosynthesis; L-tryptophan biosynthesis; L-tryptophan from chorismate: step 5/5. In terms of biological role, the beta subunit is responsible for the synthesis of L-tryptophan from indole and L-serine. In Chlamydia caviae (strain ATCC VR-813 / DSM 19441 / 03DC25 / GPIC) (Chlamydophila caviae), this protein is Tryptophan synthase beta chain 2 (trpB2).